We begin with the raw amino-acid sequence, 799 residues long: E3 UFM1-protein ligase 1 homolog (799 aa).

Residues threonine 429–aspartate 483 form a disordered region. Residues lysine 458 to lysine 468 show a composition bias toward basic residues. The span at glutamine 469 to isoleucine 478 shows a compositional bias: low complexity.

The protein belongs to the UFL1 family.

In terms of biological role, E3 UFM1-protein ligase that mediates ufmylation of target proteins. This is E3 UFM1-protein ligase 1 homolog from Dictyostelium discoideum (Social amoeba).